The primary structure comprises 190 residues: MPVVSNTELSMRRQEILEGARRCFAEHGYEGATVRRLEETVGKSRGAIFHHFSDKENLFLALAREDAARMAEVVAENGLVEVMRDMLAHPERHDWLATRLEITKMLRTDPSFRNRWIEHQRVLDDAVLERLQRNAHLGRMRDDVPIDVLHTYLETVLDGFISRLASGGDTDNLERVLDLVEESVRSSQPS.

The region spanning 10–70 (SMRRQEILEG…ALAREDAARM (61 aa)) is the HTH tetR-type domain. Residues 33–52 (TVRRLEETVGKSRGAIFHHF) constitute a DNA-binding region (H-T-H motif). Citrate is bound by residues 79–80 (LV), arginine 130, and asparagine 134. Residue glutamate 181 participates in Mg(2+) binding. Arginine 185 is a citrate binding site.

In terms of assembly, homodimer.

Its function is as follows. AcnR negatively controls the expression of the aconitase gene acn. This Corynebacterium diphtheriae (strain ATCC 700971 / NCTC 13129 / Biotype gravis) protein is HTH-type transcriptional repressor AcnR.